Consider the following 378-residue polypeptide: Glutamate 5-kinase (378 aa).

Lysine 20 contributes to the ATP binding site. Positions 60, 147, and 159 each coordinate substrate. ATP contacts are provided by residues 179–180 (TD) and 221–227 (TGGMATK). Residues 286–364 (AGDIVIDAGA…QEIYKVLGYE (79 aa)) form the PUA domain.

The protein belongs to the glutamate 5-kinase family.

It is found in the cytoplasm. It carries out the reaction L-glutamate + ATP = L-glutamyl 5-phosphate + ADP. The protein operates within amino-acid biosynthesis; L-proline biosynthesis; L-glutamate 5-semialdehyde from L-glutamate: step 1/2. In terms of biological role, catalyzes the transfer of a phosphate group to glutamate to form L-glutamate 5-phosphate. The chain is Glutamate 5-kinase from Photobacterium profundum (strain SS9).